The chain runs to 1017 residues: Putative calcium-transporting ATPase 13, plasma membrane-type (1017 aa).

Methionine 1 is subject to N-acetylmethionine. The Cytoplasmic segment spans residues 1 to 147 (MRRNVSDHAE…NTYTRQPSKG (147 aa)). Positions 20–31 (LLELPKTLSKSN) are interaction with calmodulin. A helical transmembrane segment spans residues 148–168 (LFHFVVEAFKDLTILILLGCA). Residues 169–186 (TLSLGFGIKEHGLKEGWY) are Lumenal-facing. A helical transmembrane segment spans residues 187 to 207 (DGGSIFVAVFLVVAVSAVSNF). Residues 208–336 (RQNRQFDKLS…NEQTPLQSRL (129 aa)) lie on the Cytoplasmic side of the membrane. The chain crosses the membrane as a helical span at residues 337 to 356 (DKLTSSIGKVGLLVAFLVLL). The Lumenal segment spans residues 357–393 (VLLIRYFTGTTKDESGNREYNGKTTKSDEIVNAVVKM). Residues 394–411 (VAAAVTIIVVAIPEGLPL) form a helical membrane-spanning segment. The Cytoplasmic segment spans residues 412-802 (AVTLTLAYSM…KWGRCVYNNI (391 aa)). The active-site 4-aspartylphosphate intermediate is aspartate 449. Mg(2+)-binding residues include aspartate 747 and aspartate 751. Residues 803-821 (QKFIQFQLTVNVAALVINF) traverse the membrane as a helical segment. At 822 to 832 (VAAVSAGDVPL) the chain is on the lumenal side. A helical transmembrane segment spans residues 833-853 (TAVQLLWVNLIMDTLGALALA). The Cytoplasmic portion of the chain corresponds to 854 to 873 (TEKPTNDLMKKKPIGRVAPL). A helical membrane pass occupies residues 874–896 (ITNIMWRNLLAQAFYQISVLLVL). At 897–905 (QFRGRSIFN) the chain is on the lumenal side. Residues 906–926 (VTEKVKNTLIFNTFVLCQVFN) traverse the membrane as a helical segment. Topologically, residues 927 to 944 (EFNARSLEKKNVFKGLHK) are cytoplasmic. The helical transmembrane segment at 945–966 (NRLFIGIIVVTVVLQVVMVEFL) threads the bilayer. Residues 967–976 (KRFADTERLN) are Lumenal-facing. Residues 977-998 (LGQWGVCIAIAAASWPIGWLVK) form a helical membrane-spanning segment. The Cytoplasmic portion of the chain corresponds to 999–1002 (SVPV).

Belongs to the cation transport ATPase (P-type) (TC 3.A.3) family. Type IIB subfamily.

Its subcellular location is the membrane. The catalysed reaction is Ca(2+)(in) + ATP + H2O = Ca(2+)(out) + ADP + phosphate + H(+). With respect to regulation, activated by calmodulin. In terms of biological role, this magnesium-dependent enzyme catalyzes the hydrolysis of ATP coupled with the translocation of calcium from the cytosol out of the cell or into organelles. The sequence is that of Putative calcium-transporting ATPase 13, plasma membrane-type (ACA13) from Arabidopsis thaliana (Mouse-ear cress).